The sequence spans 120 residues: Reprimo-like protein (120 aa).

Residues 67–87 (VAQIAVLCVLSLTVVFGVFFL) form a helical membrane-spanning segment. The residue at position 109 (serine 109) is a Phosphoserine.

Belongs to the reprimo family.

The protein localises to the membrane. The polypeptide is Reprimo-like protein (RPRML) (Homo sapiens (Human)).